The following is a 242-amino-acid chain: 1-(5-phosphoribosyl)-5-[(5-phosphoribosylamino)methylideneamino] imidazole-4-carboxamide isomerase (242 aa).

Catalysis depends on D7, which acts as the Proton acceptor. D129 (proton donor) is an active-site residue.

The protein belongs to the HisA/HisF family.

It is found in the cytoplasm. The enzyme catalyses 1-(5-phospho-beta-D-ribosyl)-5-[(5-phospho-beta-D-ribosylamino)methylideneamino]imidazole-4-carboxamide = 5-[(5-phospho-1-deoxy-D-ribulos-1-ylimino)methylamino]-1-(5-phospho-beta-D-ribosyl)imidazole-4-carboxamide. It functions in the pathway amino-acid biosynthesis; L-histidine biosynthesis; L-histidine from 5-phospho-alpha-D-ribose 1-diphosphate: step 4/9. The protein is 1-(5-phosphoribosyl)-5-[(5-phosphoribosylamino)methylideneamino] imidazole-4-carboxamide isomerase of Pseudoalteromonas translucida (strain TAC 125).